Reading from the N-terminus, the 165-residue chain is V-type proton ATPase subunit c2 (165 aa).

At 1–12 the chain is on the lumenal side; it reads MASTFSGDETAP. A helical membrane pass occupies residues 13-33; the sequence is FFGFLGAAAALVFSCMGAAYG. The Cytoplasmic segment spans residues 34 to 55; sequence TAKSGVGVASMGVMRPELVMKS. Residues 56-76 form a helical membrane-spanning segment; that stretch reads IVPVVMAGVLGIYGLIIAVII. Residues 77–95 lie on the Lumenal side of the membrane; that stretch reads STGINPKAKSYYLFDGYAH. A helical membrane pass occupies residues 96–117; the sequence is LSSGLACGLAGLSAGMAIGIVG. Residues 118 to 129 lie on the Cytoplasmic side of the membrane; the sequence is DAGVRANAQQPK. Residues 130-155 form a helical membrane-spanning segment; the sequence is LFVGMILILIFAEALALYGLIVGIIL. Topologically, residues 156–165 are lumenal; the sequence is SSRAGQSRAE.

The protein belongs to the V-ATPase proteolipid subunit family. V-ATPase is a heteromultimeric enzyme composed of a peripheral catalytic V1 complex (components A to H) attached to an integral membrane V0 proton pore complex (components: a, c, c'', d and e). The proteolipid components c and c'' are present as a hexameric ring that forms the proton-conducting pore. Expressed in leaf, root, flower and silique, with lower expression in roots.

It is found in the vacuole membrane. In terms of biological role, proton-conducting pore forming subunit of the membrane integral V0 complex of vacuolar ATPase. V-ATPase is responsible for acidifying a variety of intracellular compartments in eukaryotic cells. The polypeptide is V-type proton ATPase subunit c2 (VHA-c2) (Arabidopsis thaliana (Mouse-ear cress)).